Consider the following 321-residue polypeptide: Lipoyl synthase (321 aa).

The [4Fe-4S] cluster site is built by Cys68, Cys73, Cys79, Cys94, Cys98, Cys101, and Ser308. One can recognise a Radical SAM core domain in the interval 80–297 (FNHGTATFMI…KDYAEEIGFT (218 aa)).

The protein belongs to the radical SAM superfamily. Lipoyl synthase family. It depends on [4Fe-4S] cluster as a cofactor.

It localises to the cytoplasm. The catalysed reaction is [[Fe-S] cluster scaffold protein carrying a second [4Fe-4S](2+) cluster] + N(6)-octanoyl-L-lysyl-[protein] + 2 oxidized [2Fe-2S]-[ferredoxin] + 2 S-adenosyl-L-methionine + 4 H(+) = [[Fe-S] cluster scaffold protein] + N(6)-[(R)-dihydrolipoyl]-L-lysyl-[protein] + 4 Fe(3+) + 2 hydrogen sulfide + 2 5'-deoxyadenosine + 2 L-methionine + 2 reduced [2Fe-2S]-[ferredoxin]. The protein operates within protein modification; protein lipoylation via endogenous pathway; protein N(6)-(lipoyl)lysine from octanoyl-[acyl-carrier-protein]: step 2/2. Functionally, catalyzes the radical-mediated insertion of two sulfur atoms into the C-6 and C-8 positions of the octanoyl moiety bound to the lipoyl domains of lipoate-dependent enzymes, thereby converting the octanoylated domains into lipoylated derivatives. The protein is Lipoyl synthase of Shewanella loihica (strain ATCC BAA-1088 / PV-4).